We begin with the raw amino-acid sequence, 261 residues long: Cytochrome c oxidase subunit 3 (261 aa).

At 1 to 15 the chain is on the mitochondrial matrix side; the sequence is MAHQAHAYHMVDPSP. A helical transmembrane segment spans residues 16-34; it reads WPITGATAALLVTSGLAAW. The Mitochondrial intermembrane portion of the chain corresponds to 35 to 40; it reads FHFNSM. A helical transmembrane segment spans residues 41 to 66; it reads ILILMGLTLLLLTMYQWWRDIIREST. Residues 67 to 72 are Mitochondrial matrix-facing; that stretch reads FQGHHT. Residues 73–105 traverse the membrane as a helical segment; that stretch reads LPVQKSLRYGMILFITSEVFFFLGFFWAFYHSS. Residues 106–128 are Mitochondrial intermembrane-facing; that stretch reads LAPTPELGGLWPPTGITPLDPFE. The chain crosses the membrane as a helical span at residues 129-152; sequence VPLLNTAVLLASGITVTWAHHSLM. Topologically, residues 153-155 are mitochondrial matrix; it reads EGQ. The helical transmembrane segment at 156–183 threads the bilayer; it reads RKEAIQSLFITVLLGLYFTALQATEYYE. At 184 to 190 the chain is on the mitochondrial intermembrane side; sequence SPFTIAD. A helical transmembrane segment spans residues 191–223; that stretch reads GAYGSTFFVATGFHGLHVIIGSTFLIVCLVRQT. At 224 to 232 the chain is on the mitochondrial matrix side; it reads QYHFTSNHH. A helical membrane pass occupies residues 233–256; it reads FGFEAAAWYWHFVDVVWLFLYVSI. Residues 257 to 261 are Mitochondrial intermembrane-facing; that stretch reads YWWGS.

Belongs to the cytochrome c oxidase subunit 3 family. Component of the cytochrome c oxidase (complex IV, CIV), a multisubunit enzyme composed of 14 subunits. The complex is composed of a catalytic core of 3 subunits MT-CO1, MT-CO2 and MT-CO3, encoded in the mitochondrial DNA, and 11 supernumerary subunits COX4I, COX5A, COX5B, COX6A, COX6B, COX6C, COX7A, COX7B, COX7C, COX8 and NDUFA4, which are encoded in the nuclear genome. The complex exists as a monomer or a dimer and forms supercomplexes (SCs) in the inner mitochondrial membrane with NADH-ubiquinone oxidoreductase (complex I, CI) and ubiquinol-cytochrome c oxidoreductase (cytochrome b-c1 complex, complex III, CIII), resulting in different assemblies (supercomplex SCI(1)III(2)IV(1) and megacomplex MCI(2)III(2)IV(2)).

The protein localises to the mitochondrion inner membrane. The catalysed reaction is 4 Fe(II)-[cytochrome c] + O2 + 8 H(+)(in) = 4 Fe(III)-[cytochrome c] + 2 H2O + 4 H(+)(out). Component of the cytochrome c oxidase, the last enzyme in the mitochondrial electron transport chain which drives oxidative phosphorylation. The respiratory chain contains 3 multisubunit complexes succinate dehydrogenase (complex II, CII), ubiquinol-cytochrome c oxidoreductase (cytochrome b-c1 complex, complex III, CIII) and cytochrome c oxidase (complex IV, CIV), that cooperate to transfer electrons derived from NADH and succinate to molecular oxygen, creating an electrochemical gradient over the inner membrane that drives transmembrane transport and the ATP synthase. Cytochrome c oxidase is the component of the respiratory chain that catalyzes the reduction of oxygen to water. Electrons originating from reduced cytochrome c in the intermembrane space (IMS) are transferred via the dinuclear copper A center (CU(A)) of subunit 2 and heme A of subunit 1 to the active site in subunit 1, a binuclear center (BNC) formed by heme A3 and copper B (CU(B)). The BNC reduces molecular oxygen to 2 water molecules using 4 electrons from cytochrome c in the IMS and 4 protons from the mitochondrial matrix. The polypeptide is Cytochrome c oxidase subunit 3 (MT-CO3) (Latimeria chalumnae (Coelacanth)).